Consider the following 326-residue polypeptide: MKVLLSALLLLLFAFEPSASGKKLSDPVLSKRMELYHKIEAVTQIPWYALAAVDQYEENVRSNRKDLPEKAGIISIYIPDDIWSGPENPNPKDDAPLSIKVFDGIGMDGDGDGKAEVSNDEDILYTFSQYLLSYGTDEDNIRIGLWNYYRRDQTVGIISEFMKLFKAYGHIDLGEHAFPLPIRTDYSYRSTWGDARGFGGRRIHEGTDIFAHYGLPVKSTCYGVVEMKGWNRFGGWRIGIRDINNTYHYFAHLNGFAKGIKTGQIVEPGQVIGSVGSSGYGPPGTAGKFPPHLHYGMYKDNGRTEWSFDPYPHLRAWERYEYQKKK.

A signal peptide spans methionine 1 to alanine 19. Histidine 204, aspartate 208, histidine 292, and histidine 294 together coordinate Zn(2+).

Belongs to the peptidase M23B family. It depends on Zn(2+) as a cofactor.

Its function is as follows. L-Ala--D-Glu endopeptidase involved in production of single L-alanine side chains from tetrapeptides in the spore cortex peptidoglycan. Therefore, is required for the endospore cortex maturation. This chain is L-Ala--D-Glu endopeptidase (lytH), found in Bacillus subtilis (strain 168).